A 154-amino-acid polypeptide reads, in one-letter code: Deoxyuridine 5'-triphosphate nucleotidohydrolase (154 aa).

Substrate is bound by residues arginine 74–glycine 76, asparagine 87, threonine 91–aspartate 93, and lysine 101.

This sequence belongs to the dUTPase family. Mg(2+) serves as cofactor.

The catalysed reaction is dUTP + H2O = dUMP + diphosphate + H(+). It participates in pyrimidine metabolism; dUMP biosynthesis; dUMP from dCTP (dUTP route): step 2/2. In terms of biological role, this enzyme is involved in nucleotide metabolism: it produces dUMP, the immediate precursor of thymidine nucleotides and it decreases the intracellular concentration of dUTP so that uracil cannot be incorporated into DNA. The chain is Deoxyuridine 5'-triphosphate nucleotidohydrolase from Cytophaga hutchinsonii (strain ATCC 33406 / DSM 1761 / CIP 103989 / NBRC 15051 / NCIMB 9469 / D465).